Here is a 314-residue protein sequence, read N- to C-terminus: Homoserine O-acetyltransferase (314 aa).

Cys142 serves as the catalytic Acyl-thioester intermediate. The substrate site is built by Lys163 and Ser192. The Proton acceptor role is filled by His235. Glu237 is an active-site residue. Residue Arg249 participates in substrate binding.

This sequence belongs to the MetA family.

Its subcellular location is the cytoplasm. The catalysed reaction is L-homoserine + acetyl-CoA = O-acetyl-L-homoserine + CoA. It functions in the pathway amino-acid biosynthesis; L-methionine biosynthesis via de novo pathway; O-acetyl-L-homoserine from L-homoserine: step 1/1. Transfers an acetyl group from acetyl-CoA to L-homoserine, forming acetyl-L-homoserine. In Streptococcus thermophilus (strain ATCC BAA-250 / LMG 18311), this protein is Homoserine O-acetyltransferase.